The following is a 339-amino-acid chain: 2-keto-3-deoxygluconate permease (339 aa).

A run of 10 helical transmembrane segments spans residues 10–30 (IPGGMMLVPLFLGALCHTFAP), 42–62 (GLISGTVPILAVWFFCMGASI), 77–97 (LVVTKIAVAWVVAAVASRILP), 100–120 (GVEVGFFAGLSTLALVAAMDM), 141–161 (AFVLMSLESGPLMTMVILGTA), 163–183 (IASFEPHVFVGAVLPFLVGFA), 199–219 (VQTLIPFFAFALGNTIDLSVI), 224–244 (LLGVLLGISVIIITGIPLIVA), 254–274 (TAGIAASSSAGAAVATPVLIA), and 289–309 (TLVATSVIVTSVLVPIITAMW). The tract at residues 315–339 (GGDGTVPKEDAVEEKAEQQRRRIIK) is disordered. Residues 320–339 (VPKEDAVEEKAEQQRRRIIK) are compositionally biased toward basic and acidic residues.

Belongs to the KdgT transporter family.

The protein localises to the cell inner membrane. The enzyme catalyses 2-dehydro-3-deoxy-D-gluconate(in) + H(+)(in) = 2-dehydro-3-deoxy-D-gluconate(out) + H(+)(out). Its activity is regulated as follows. Uptake is inhibited by the protonophore uncouplers carbonyl cyanide m-chlorophenylhydrazone (CCCP) and 2,4-dinitrophenol, and by NaN(3). Functionally, catalyzes the proton-dependent uptake of 2-keto-3-deoxygluconate (KDG) into the cell. Can also mediate the uptake of glucuronate with a low affinity, and may mediate the uptake of 5-keto-4-deoxyuronate (DKI) and 2,5-diketo-3-deoxygluconate (DKII), which are intermediates in pectin degradation. The polypeptide is 2-keto-3-deoxygluconate permease (Dickeya chrysanthemi (Pectobacterium chrysanthemi)).